We begin with the raw amino-acid sequence, 68 residues long: DNA-directed RNA polymerase subunit omega (68 aa).

This sequence belongs to the RNA polymerase subunit omega family. The RNAP catalytic core consists of 2 alpha, 1 beta, 1 beta' and 1 omega subunit. When a sigma factor is associated with the core the holoenzyme is formed, which can initiate transcription.

It carries out the reaction RNA(n) + a ribonucleoside 5'-triphosphate = RNA(n+1) + diphosphate. Promotes RNA polymerase assembly. Latches the N- and C-terminal regions of the beta' subunit thereby facilitating its interaction with the beta and alpha subunits. The protein is DNA-directed RNA polymerase subunit omega of Desulfitobacterium hafniense (strain DSM 10664 / DCB-2).